Reading from the N-terminus, the 281-residue chain is Proline iminopeptidase PfmaB (281 aa).

The region spanning 23–267 (PLVITLHGGR…NANHSVHVEK (245 aa)) is the AB hydrolase-1 domain.

Belongs to the peptidase S33 family.

The enzyme catalyses Release of N-terminal proline from a peptide.. Proline iminopeptidase; part of the gene cluster that mediates the biosynthesis of dihydroxynaphthalene (DHN)-melanin, a bluish-green pigment forming a dark layer in the conidial wall that protects the conidia from UV radiations. The first step of the pathway is the production of the pentaketide 1,3,6,8-tetrahydroxynaphthalene (1,3,6,8-THN or T4HN) by the polyketide synthase PfmaE though condensation of acetyl-CoA with malonyl-CoA. T4HN is not stable and easily oxidizes into the stable form flaviolin. T4HN is also substrate of the hydroxynaphthalene reductase PfmaG to yield scytalone. The scytalone dehydratase PfmaJ then reduces scytalone to 1,3,8-THN. 1,3,8-THN is then substrate of the hydroxynaphthalene reductase PfmaI to yield vermelone. Vermelone is further converted by the multicopper oxidase PfmaD to 1,8-DHN. Finally the laccase PFICI_06862 transforms 1,8-DHN to DHN-melanin. The roles of the 5-oxoprolinase PfmaA and the proline iminopeptidase PfmaB within the cluster have not been elucidated yet. This is Proline iminopeptidase PfmaB from Pestalotiopsis fici (strain W106-1 / CGMCC3.15140).